A 332-amino-acid polypeptide reads, in one-letter code: L-lactate dehydrogenase A chain (332 aa).

Ala-2 is modified (N-acetylalanine). N6-acetyllysine; alternate is present on Lys-5. Lys-5 carries the post-translational modification N6-succinyllysine; alternate. Residue Lys-14 is modified to N6-acetyllysine. An NAD(+)-binding site is contributed by 29–57 (GAVGMACAISILMKDLADELALVDVMEDK). An N6-acetyllysine; alternate modification is found at Lys-57. Lys-57 participates in a covalent cross-link: Glycyl lysine isopeptide (Lys-Gly) (interchain with G-Cter in SUMO2); alternate. Lys-81 carries the N6-acetyllysine modification. NAD(+) is bound at residue Arg-99. A substrate-binding site is contributed by Arg-106. Lys-118 is modified (N6-acetyllysine; alternate). An N6-succinyllysine; alternate modification is found at Lys-118. Lys-126 is modified (N6-acetyllysine). Asn-138 is a binding site for NAD(+). 2 residues coordinate substrate: Asn-138 and Arg-169. His-193 (proton acceptor) is an active-site residue. Residues Lys-224 and Lys-232 each carry the N6-acetyllysine modification. Position 239 is a phosphotyrosine (Tyr-239). Lys-243 is modified (N6-acetyllysine). Residue Thr-248 participates in substrate binding. Thr-309 is modified (phosphothreonine). Lys-318 is modified (N6-acetyllysine; alternate). Lys-318 carries the post-translational modification N6-succinyllysine; alternate. Thr-322 carries the phosphothreonine modification.

Belongs to the LDH/MDH superfamily. LDH family. In terms of assembly, homotetramer. Interacts with PTEN upstream reading frame protein MP31. Post-translationally, ISGylated.

Its subcellular location is the cytoplasm. The catalysed reaction is (S)-lactate + NAD(+) = pyruvate + NADH + H(+). It functions in the pathway fermentation; pyruvate fermentation to lactate; (S)-lactate from pyruvate: step 1/1. Functionally, interconverts simultaneously and stereospecifically pyruvate and lactate with concomitant interconversion of NADH and NAD(+). In Mus musculus (Mouse), this protein is L-lactate dehydrogenase A chain (Ldha).